The chain runs to 276 residues: Replication protein A 32 kDa subunit-A (276 aa).

The segment covering Gly-19–Gly-31 has biased composition (gly residues). Positions Gly-19–Gln-47 are disordered. Residues Val-77–Pro-151 constitute a DNA-binding region (OB).

It belongs to the replication factor A protein 2 family. As to quaternary structure, component of the replication protein A complex (RPA/RP-A), a heterotrimeric complex composed of RPA1, RPA2 and RPA3. Differentially phosphorylated throughout the cell cycle, becoming phosphorylated at the G1-S transition and dephosphorylated in late mitosis. Phosphorylation increases upon replication fork stalling.

The protein localises to the nucleus. Its subcellular location is the PML body. Functionally, as part of the heterotrimeric replication protein A complex (RPA/RP-A), binds and stabilizes single-stranded DNA intermediates, that form during DNA replication or upon DNA stress. It prevents their reannealing and in parallel, recruits and activates different proteins and complexes involved in DNA metabolism. Thereby, it plays an essential role both in DNA replication and the cellular response to DNA damage. The polypeptide is Replication protein A 32 kDa subunit-A (rpa2-a) (Xenopus laevis (African clawed frog)).